Consider the following 371-residue polypeptide: Antibiotic efflux pump periplasmic linker protein ArpA (371 aa).

Positions 1 to 22 are cleaved as a signal peptide; it reads MQFKPAVTALVSAVALATLLSG. The N-palmitoyl cysteine moiety is linked to residue C23. C23 is lipidated: S-diacylglycerol cysteine. The stretch at 115–155 forms a coiled coil; the sequence is LAERYKQLIDEQAVSKQEYDDANAKRLQAEASLKSAQIDLR.

It belongs to the membrane fusion protein (MFP) (TC 8.A.1) family.

The protein localises to the cell inner membrane. Its function is as follows. The periplasmic linker protein component of an antibiotic efflux pump. Confers resistance to numerous structurally unrelated antibiotics such as carbenicillin, chloramphenicol, erythromycin, novobiocin, streptomycin and tetracycline. Is not involved in organic solvent efflux. This Pseudomonas putida (Arthrobacter siderocapsulatus) protein is Antibiotic efflux pump periplasmic linker protein ArpA (arpA).